The sequence spans 1522 residues: Lysophospholipase nte1 (1522 aa).

Positions 1 to 24 are disordered; that stretch reads MADGVTQVDSTGLHSFSPSPSLSS. The Cytoplasmic portion of the chain corresponds to 1–65; the sequence is MADGVTQVDS…LPPVPTTMAG (65 aa). Residues 15–24 are compositionally biased toward low complexity; it reads SFSPSPSLSS. Residues 66 to 86 form a helical membrane-spanning segment; the sequence is WIGWVFSFFFQVIPSVLYWII. Residues 87-108 are Lumenal-facing; the sequence is TFSTITLPTWLFTLFSMSLTFT. A helical membrane pass occupies residues 109–129; it reads MNFTTLLLIVLAVVSTISWFI. Topologically, residues 130-1522 are cytoplasmic; sequence RYRFLNMYSR…RTLAPRRASI (1393 aa). Disordered regions lie at residues 308 to 384, 523 to 544, and 757 to 776; these read VPNS…SVHP, RAATVVTPESAPAEHDTYGVSP, and TTTANSVGAGGTAANDSRRR. A compositionally biased stretch (basic residues) spans 369-381; sequence ESRKHSSRKRRKS. A nucleoside 3',5'-cyclic phosphate-binding positions include 680-800 and 840-960; these read GGTS…AVAS and RLTS…IAQR. The 165-residue stretch at 1219–1383 folds into the PNPLA domain; sequence LVLGGGGARG…IDNLTVDHMK (165 aa). The GXGXXG motif lies at 1223 to 1228; sequence GGGARG. The GXSXG signature appears at 1250–1254; that stretch reads GTSIG. S1252 functions as the Nucleophile in the catalytic mechanism. The active-site Proton acceptor is the D1370. Positions 1370 to 1372 match the DGA/G motif; it reads DGG. The disordered stretch occupies residues 1501 to 1522; the sequence is LPEETEEKKKLQRTLAPRRASI.

Belongs to the NTE family.

The protein resides in the endoplasmic reticulum membrane. It catalyses the reaction a 1-acyl-sn-glycero-3-phosphocholine + H2O = sn-glycerol 3-phosphocholine + a fatty acid + H(+). Inhibited by organophosphorus esters. Functionally, intracellular phospholipase B that catalyzes the double deacylation of phosphatidylcholine (PC) to glycerophosphocholine (GroPCho). Plays an important role in membrane lipid homeostasis. Responsible for the rapid PC turnover in response to inositol, elevated temperatures, or when choline is present in the growth medium. This is Lysophospholipase nte1 (nte1) from Aspergillus fumigatus (strain ATCC MYA-4609 / CBS 101355 / FGSC A1100 / Af293) (Neosartorya fumigata).